The primary structure comprises 236 residues: Ribonuclease HIII (236 aa).

One can recognise an RNase H type-2 domain in the interval leucine 9–alanine 236. 3 residues coordinate a divalent metal cation: aspartate 15, glutamate 16, and aspartate 122.

Belongs to the RNase HII family. RnhC subfamily. The cofactor is a divalent metal cation.

It is found in the cytoplasm. It catalyses the reaction Endonucleolytic cleavage to 5'-phosphomonoester.. In terms of biological role, endonuclease that specifically degrades the RNA of RNA-DNA hybrids. This chain is Ribonuclease HIII (rnhC), found in Mycoplasma pneumoniae (strain ATCC 29342 / M129 / Subtype 1) (Mycoplasmoides pneumoniae).